The primary structure comprises 360 residues: MKALILVGGYGTRLRPLTLSVPKPLVDFCNKPILLHQVEALVKAGVTHVILAVSYMSDMLEKEMKEQEKRLGIRISMSHEKEPLGTAGPLALARELLTENSEPFFVLNSDVICDFPFEDMVRFHKHHGKEGTIVVTKVEEPSKYGVVVYETESGQIQRFVEKPQVFVSNKINSGLYIFSPAVLDRIQLRPTSIEKEIFPAMAQEGQLYAMELQGFWMDIGQPKDFLTGMCMYLQSVRQKHPEWLHAGPGFIGNVLVDPTAKIGQNCSIGPNVTIGPGVTVEDGVRIKRCTVMKGSRLHSHSWLESSIVGWSSSVGQWVRMENVTVLGEDVIVNDELYLNGANVLPHKCISESVPEPRIIM.

This sequence belongs to the transferase hexapeptide repeat family.

The catalysed reaction is alpha-D-mannose 1-phosphate + GTP + H(+) = GDP-alpha-D-mannose + diphosphate. The protein operates within nucleotide-sugar biosynthesis; GDP-alpha-D-mannose biosynthesis; GDP-alpha-D-mannose from alpha-D-mannose 1-phosphate (GTP route): step 1/1. The polypeptide is Mannose-1-phosphate guanyltransferase beta-A (gmppb-a) (Xenopus laevis (African clawed frog)).